Here is a 227-residue protein sequence, read N- to C-terminus: tRNA (guanine-N(1)-)-methyltransferase (227 aa).

S-adenosyl-L-methionine is bound by residues Gly107 and 127–132 (LGDFIL).

The protein belongs to the RNA methyltransferase TrmD family. As to quaternary structure, homodimer.

It localises to the cytoplasm. The catalysed reaction is guanosine(37) in tRNA + S-adenosyl-L-methionine = N(1)-methylguanosine(37) in tRNA + S-adenosyl-L-homocysteine + H(+). Specifically methylates guanosine-37 in various tRNAs. The chain is tRNA (guanine-N(1)-)-methyltransferase from Mesomycoplasma hyopneumoniae (strain 232) (Mycoplasma hyopneumoniae).